Here is a 464-residue protein sequence, read N- to C-terminus: tRNA-2-methylthio-N(6)-dimethylallyladenosine synthase (464 aa).

Positions 19–135 (GSYWITTFGC…LENLLERVDS (117 aa)) constitute an MTTase N-terminal domain. Positions 28, 64, 98, 170, 174, and 177 each coordinate [4Fe-4S] cluster. Positions 156–393 (RDSTICGWVN…NELVEATSRK (238 aa)) constitute a Radical SAM core domain. The TRAM domain maps to 396–464 (QRYLNNTESV…SFSLSGQIYK (69 aa)).

It belongs to the methylthiotransferase family. MiaB subfamily. Monomer. Requires [4Fe-4S] cluster as cofactor.

The protein resides in the cytoplasm. It catalyses the reaction N(6)-dimethylallyladenosine(37) in tRNA + (sulfur carrier)-SH + AH2 + 2 S-adenosyl-L-methionine = 2-methylsulfanyl-N(6)-dimethylallyladenosine(37) in tRNA + (sulfur carrier)-H + 5'-deoxyadenosine + L-methionine + A + S-adenosyl-L-homocysteine + 2 H(+). Catalyzes the methylthiolation of N6-(dimethylallyl)adenosine (i(6)A), leading to the formation of 2-methylthio-N6-(dimethylallyl)adenosine (ms(2)i(6)A) at position 37 in tRNAs that read codons beginning with uridine. The polypeptide is tRNA-2-methylthio-N(6)-dimethylallyladenosine synthase (Prochlorococcus marinus (strain MIT 9515)).